Consider the following 568-residue polypeptide: 3-(3-hydroxy-phenyl)propionate/3-hydroxycinnamic acid hydroxylase (568 aa).

Residues 13–42 and 278–288 each bind FAD; these read DVVI…IVEE and FRKGRMFLAGD.

Belongs to the PheA/TfdB FAD monooxygenase family. FAD is required as a cofactor.

The catalysed reaction is 3-(3-hydroxyphenyl)propanoate + NADH + O2 + H(+) = 3-(2,3-dihydroxyphenyl)propanoate + NAD(+) + H2O. It catalyses the reaction (2E)-3-(3-hydroxyphenyl)prop-2-enoate + NADH + O2 + H(+) = (2E)-3-(2,3-dihydroxyphenyl)prop-2-enoate + NAD(+) + H2O. It participates in aromatic compound metabolism; 3-phenylpropanoate degradation. Functionally, catalyzes the insertion of one atom of molecular oxygen into position 2 of the phenyl ring of 3-(3-hydroxyphenyl)propionate (3-HPP) and hydroxycinnamic acid (3HCI). In Mycobacterium sp. (strain JLS), this protein is 3-(3-hydroxy-phenyl)propionate/3-hydroxycinnamic acid hydroxylase.